The chain runs to 579 residues: Amino acid transporter 1 (579 aa).

Topologically, residues 1–83 are cytoplasmic; that stretch reads MSAKDYDFDI…KRGLSTRHMQ (83 aa). A helical membrane pass occupies residues 84–104; it reads LMSIGGAIGSGLYVGSGSALA. Topologically, residues 105–108 are extracellular; it reads DGGP. Residues 109–129 traverse the membrane as a helical segment; the sequence is ASVIINYILIGIMMFFVIYAL. Residues 130–161 are Cytoplasmic-facing; it reads GEMAVAYPVAGSFNTYATRFIDPAWGFAVSWN. Residues 162-184 form a helical membrane-spanning segment; sequence YFFNYFVTFPFELTTCAITFTFW. Topologically, residues 185 to 186 are extracellular; it reads TD. The chain crosses the membrane as a helical span at residues 187-207; that stretch reads VNCAVWISIFLVVVIGINLFG. Over 208–215 the chain is Cytoplasmic; the sequence is VRVFGEVE. A helical transmembrane segment spans residues 216-236; sequence FVLALIKVVATVGFIILAIII. At 237–265 the chain is on the extracellular side; sequence NCGGVPTDHRGYIGGSIIKQKPFRHGFKG. Residues 266 to 286 form a helical membrane-spanning segment; that stretch reads FCSVYTTAAFSFSGTEIVGLA. Topologically, residues 287–303 are cytoplasmic; sequence AAEVGDPRKTLPGAVKQ. The chain crosses the membrane as a helical span at residues 304–324; sequence VFWRVAIFYIVSLILIGLLIS. Residues 325-347 lie on the Extracellular side of the membrane; that stretch reads PDDPKLMGNGSASVSPFVLAIQE. The chain crosses the membrane as a helical span at residues 348 to 368; sequence ANIKGLPSVFNAVIIISVISV. The Cytoplasmic portion of the chain corresponds to 369–401; it reads TNSSTYTAGRTLHGMANLKQAPAFFKYTDRLGR. A helical membrane pass occupies residues 402–422; the sequence is PLIAMIVVLSFGFFAYINEAN. Residues 423–431 are Extracellular-facing; it reads NNGNDISDT. A helical transmembrane segment spans residues 432–452; sequence VFDWLLAISGLSNFFTWGSIC. Residues 453-471 lie on the Cytoplasmic side of the membrane; the sequence is LSHIMFRLAFKKQGHSLKE. Residues 472-492 form a helical membrane-spanning segment; it reads LGFVSPMGIWGSVIGLGFNIL. Over 493-513 the chain is Extracellular; sequence CLMAEFYVSLFPIGGSPNAND. The chain crosses the membrane as a helical span at residues 514–534; sequence FFQGYLAACITLVFFIGYKIY. The Cytoplasmic portion of the chain corresponds to 535 to 579; it reads DRSHIPSLDKLDITTGLKTYEYEETKDSSDTGRFRFFKKIINTVC.

The protein belongs to the amino acid-polyamine-organocation (APC) superfamily.

It localises to the golgi apparatus membrane. The protein resides in the cell membrane. Its function is as follows. Probable amino acid transporter that may play a role in function in microtubule organization since it causes microtubule defects when overexpressed. This chain is Amino acid transporter 1 (aat1), found in Schizosaccharomyces pombe (strain 972 / ATCC 24843) (Fission yeast).